The primary structure comprises 649 residues: Acetyl-coenzyme A synthetase (649 aa).

CoA contacts are provided by residues 189–192 (RGGK), Thr-311, and Asn-335. ATP contacts are provided by residues 387-389 (GEP), 411-416 (DTWWQT), Asp-500, and Arg-515. Ser-523 lines the CoA pocket. Residue Arg-526 coordinates ATP. Val-537, His-539, and Val-542 together coordinate Mg(2+). Arg-584 provides a ligand contact to CoA. At Lys-609 the chain carries N6-acetyllysine.

Belongs to the ATP-dependent AMP-binding enzyme family. The cofactor is Mg(2+). In terms of processing, acetylated. Deacetylation by the SIR2-homolog deacetylase activates the enzyme.

It carries out the reaction acetate + ATP + CoA = acetyl-CoA + AMP + diphosphate. Its function is as follows. Catalyzes the conversion of acetate into acetyl-CoA (AcCoA), an essential intermediate at the junction of anabolic and catabolic pathways. AcsA undergoes a two-step reaction. In the first half reaction, AcsA combines acetate with ATP to form acetyl-adenylate (AcAMP) intermediate. In the second half reaction, it can then transfer the acetyl group from AcAMP to the sulfhydryl group of CoA, forming the product AcCoA. The protein is Acetyl-coenzyme A synthetase of Sinorhizobium medicae (strain WSM419) (Ensifer medicae).